The sequence spans 408 residues: Serine/threonine transporter SstT (408 aa).

9 consecutive transmembrane segments (helical) span residues 11–31, 43–63, 82–102, 141–161, 192–212, 216–236, 298–318, 339–359, and 363–383; these read LANG…VSLA, FLGS…VFIL, IVVL…LLSM, ALMT…GLAL, IGIF…AIAG, LLAV…PLIV, MGGA…TLGI, ASGV…LFGI, and VAMQ…AAET.

This sequence belongs to the dicarboxylate/amino acid:cation symporter (DAACS) (TC 2.A.23) family.

The protein resides in the cell inner membrane. The catalysed reaction is L-serine(in) + Na(+)(in) = L-serine(out) + Na(+)(out). The enzyme catalyses L-threonine(in) + Na(+)(in) = L-threonine(out) + Na(+)(out). In terms of biological role, involved in the import of serine and threonine into the cell, with the concomitant import of sodium (symport system). The sequence is that of Serine/threonine transporter SstT from Shewanella sp. (strain MR-7).